The sequence spans 479 residues: MAIAWGTVPSLAPVNLKKEGLQVVKEDHLSAREQGVKLQGNGTGFRQEPLCKRFRQLRYEETTGPREALSRLRELCRQWLQPETHTKEQILELLVLEQFLTILPEELQARLREHHLESGEDAVVFLEDLQLELGGTGQQEDPNQAKKQEVLMEETAPGKATPERQVQPEGDVPQPEREKGEAKRIENGKLVVETDSCGRVESSGKPFEPMEVHYKDSNLDRQQAEPKEKTDCKCSEYGQAFFQHSDLIKHESSHRKEKLCEAEVCQSLSLPGHQKICSREKGHQCHECGKAFQRSSHLVRHQKIHLGEKPYQCKECGKVFSQNAGLLEHLRIHTGEKPYLCIHCGKNFRRSSHLNRHQRIHSQEEPCQCKECGKTFSQALLLTHHQRIHSHSRSHQCNECGKTFSLTSDLIRHHRIHTGEKPFKCTICQKAFRLNSHLAQHVRIHNEEKPYKCNECGEAFRQRSGLFQHQRYHHKNRLA.

Residue Lys17 forms a Glycyl lysine isopeptide (Lys-Gly) (interchain with G-Cter in SUMO2) linkage. The SCAN box domain occupies 51 to 133; sequence CKRFRQLRYE…VFLEDLQLEL (83 aa). Positions 155 to 187 are disordered; the sequence is TAPGKATPERQVQPEGDVPQPEREKGEAKRIEN. Residues 174–187 show a composition bias toward basic and acidic residues; sequence QPEREKGEAKRIEN. The segment at 232-254 adopts a C2H2-type 1; degenerate zinc-finger fold; the sequence is CKCSEYGQAFFQHSDLIKHESSH. 7 C2H2-type zinc fingers span residues 283 to 305, 311 to 333, 339 to 361, 367 to 389, 395 to 417, 423 to 445, and 451 to 473; these read HQCHECGKAFQRSSHLVRHQKIH, YQCKECGKVFSQNAGLLEHLRIH, YLCIHCGKNFRRSSHLNRHQRIH, CQCKECGKTFSQALLLTHHQRIH, HQCNECGKTFSLTSDLIRHHRIH, FKCTICQKAFRLNSHLAQHVRIH, and YKCNECGEAFRQRSGLFQHQRYH.

The protein localises to the nucleus. Its function is as follows. May be involved in transcriptional regulation. The polypeptide is Zinc finger and SCAN domain-containing protein 26 (ZSCAN26) (Bos taurus (Bovine)).